Here is a 416-residue protein sequence, read N- to C-terminus: UDP-N-acetylglucosamine 1-carboxyvinyltransferase (416 aa).

Residue 22–23 coordinates phosphoenolpyruvate; sequence KN. Arg-91 contributes to the UDP-N-acetyl-alpha-D-glucosamine binding site. The active-site Proton donor is the Cys-115. At Cys-115 the chain carries 2-(S-cysteinyl)pyruvic acid O-phosphothioketal. UDP-N-acetyl-alpha-D-glucosamine contacts are provided by residues 120–124, Asp-303, and Ile-325; that span reads RPVDL.

Belongs to the EPSP synthase family. MurA subfamily.

It is found in the cytoplasm. The catalysed reaction is phosphoenolpyruvate + UDP-N-acetyl-alpha-D-glucosamine = UDP-N-acetyl-3-O-(1-carboxyvinyl)-alpha-D-glucosamine + phosphate. It participates in cell wall biogenesis; peptidoglycan biosynthesis. Its function is as follows. Cell wall formation. Adds enolpyruvyl to UDP-N-acetylglucosamine. In Oleidesulfovibrio alaskensis (strain ATCC BAA-1058 / DSM 17464 / G20) (Desulfovibrio alaskensis), this protein is UDP-N-acetylglucosamine 1-carboxyvinyltransferase.